A 329-amino-acid polypeptide reads, in one-letter code: Ketol-acid reductoisomerase (NADP(+)) (329 aa).

Residues 1-181 form the KARI N-terminal Rossmann domain; the sequence is MKVYYENDAD…GATRSGVLQT (181 aa). NADP(+)-binding positions include 24–27, Arg-47, and 82–85; these read YGSQ and DQVQ. The active site involves His-107. Gly-133 provides a ligand contact to NADP(+). In terms of domain architecture, KARI C-terminal knotted spans 182–327; that stretch reads TFREETETDL…GELRKMMSWL (146 aa). Mg(2+) contacts are provided by Asp-190, Glu-194, Glu-226, and Glu-230. Ser-251 provides a ligand contact to substrate.

Belongs to the ketol-acid reductoisomerase family. It depends on Mg(2+) as a cofactor.

The enzyme catalyses (2R)-2,3-dihydroxy-3-methylbutanoate + NADP(+) = (2S)-2-acetolactate + NADPH + H(+). The catalysed reaction is (2R,3R)-2,3-dihydroxy-3-methylpentanoate + NADP(+) = (S)-2-ethyl-2-hydroxy-3-oxobutanoate + NADPH + H(+). The protein operates within amino-acid biosynthesis; L-isoleucine biosynthesis; L-isoleucine from 2-oxobutanoate: step 2/4. It participates in amino-acid biosynthesis; L-valine biosynthesis; L-valine from pyruvate: step 2/4. In terms of biological role, involved in the biosynthesis of branched-chain amino acids (BCAA). Catalyzes an alkyl-migration followed by a ketol-acid reduction of (S)-2-acetolactate (S2AL) to yield (R)-2,3-dihydroxy-isovalerate. In the isomerase reaction, S2AL is rearranged via a Mg-dependent methyl migration to produce 3-hydroxy-3-methyl-2-ketobutyrate (HMKB). In the reductase reaction, this 2-ketoacid undergoes a metal-dependent reduction by NADPH to yield (R)-2,3-dihydroxy-isovalerate. The sequence is that of Ketol-acid reductoisomerase (NADP(+)) from Maridesulfovibrio salexigens (strain ATCC 14822 / DSM 2638 / NCIMB 8403 / VKM B-1763) (Desulfovibrio salexigens).